We begin with the raw amino-acid sequence, 831 residues long: Periplasmic nitrate reductase (831 aa).

The tat-type signal signal peptide spans 1–29 (MKFTRREFMKAQAAASAAAVAGIALPATA). One can recognise a 4Fe-4S Mo/W bis-MGD-type domain in the interval 41–97 (IKWEKAPCRFCGTGCSVLVGTQHGRVVATQGDPESPVNKGLNCVKGYFLSKIMYGKD). 4 residues coordinate [4Fe-4S] cluster: C48, C51, C55, and C83. Mo-bis(molybdopterin guanine dinucleotide) contacts are provided by residues K85, Q152, N177, C181, 214-221 (WGSNMAEM), 245-249 (STYTH), 264-266 (QSD), M374, Q378, N484, 510-511 (SD), K533, D560, and 720-729 (TGRVLEHWHS). Position 796 (W796) interacts with substrate. Positions 804 and 821 each coordinate Mo-bis(molybdopterin guanine dinucleotide).

It belongs to the prokaryotic molybdopterin-containing oxidoreductase family. NasA/NapA/NarB subfamily. Component of the periplasmic nitrate reductase NapAB complex composed of NapA and NapB. It depends on [4Fe-4S] cluster as a cofactor. The cofactor is Mo-bis(molybdopterin guanine dinucleotide). Post-translationally, predicted to be exported by the Tat system. The position of the signal peptide cleavage has not been experimentally proven.

Its subcellular location is the periplasm. It catalyses the reaction 2 Fe(II)-[cytochrome] + nitrate + 2 H(+) = 2 Fe(III)-[cytochrome] + nitrite + H2O. Functionally, catalytic subunit of the periplasmic nitrate reductase complex NapAB. Receives electrons from NapB and catalyzes the reduction of nitrate to nitrite. The protein is Periplasmic nitrate reductase of Psychromonas ingrahamii (strain DSM 17664 / CCUG 51855 / 37).